A 321-amino-acid polypeptide reads, in one-letter code: 4-dihydromethyl-trisporate dehydrogenase (321 aa).

Y51 serves as the catalytic Proton donor. A substrate-binding site is contributed by H113.

The protein belongs to the aldo/keto reductase family.

Its pathway is pheromone biosynthesis; trisporate biosynthesis. Functionally, catalyzes the NADP-dependent oxidation of (+) mating-type specific precursor 4-dihydromethyl-trisporate to methyl-trisporate. The sequence is that of 4-dihydromethyl-trisporate dehydrogenase (tdh) from Mucor mucedo (Common pinmould).